The sequence spans 403 residues: Phosphopentomutase (403 aa).

Aspartate 13, aspartate 298, histidine 303, aspartate 339, histidine 340, and histidine 351 together coordinate Mn(2+).

This sequence belongs to the phosphopentomutase family. Requires Mn(2+) as cofactor.

The protein resides in the cytoplasm. It catalyses the reaction 2-deoxy-alpha-D-ribose 1-phosphate = 2-deoxy-D-ribose 5-phosphate. The catalysed reaction is alpha-D-ribose 1-phosphate = D-ribose 5-phosphate. The protein operates within carbohydrate degradation; 2-deoxy-D-ribose 1-phosphate degradation; D-glyceraldehyde 3-phosphate and acetaldehyde from 2-deoxy-alpha-D-ribose 1-phosphate: step 1/2. Functionally, isomerase that catalyzes the conversion of deoxy-ribose 1-phosphate (dRib-1-P) and ribose 1-phosphate (Rib-1-P) to deoxy-ribose 5-phosphate (dRib-5-P) and ribose 5-phosphate (Rib-5-P), respectively. The sequence is that of Phosphopentomutase from Streptococcus mutans serotype c (strain ATCC 700610 / UA159).